We begin with the raw amino-acid sequence, 200 residues long: Recombination protein RecR (200 aa).

The C4-type zinc finger occupies 59–74; sequence CDICGNVCESSPCPVC. Positions 82 to 177 constitute a Toprim domain; that stretch reads SVICVVEEPK…KVTRLASGLP (96 aa).

It belongs to the RecR family.

Functionally, may play a role in DNA repair. It seems to be involved in an RecBC-independent recombinational process of DNA repair. It may act with RecF and RecO. This is Recombination protein RecR from Bifidobacterium longum (strain DJO10A).